Here is a 706-residue protein sequence, read N- to C-terminus: GDNF-inducible zinc finger protein 1 (706 aa).

The BTB domain occupies C31–E103. Residues V149–A165 are compositionally biased toward polar residues. Disordered regions lie at residues V149–R220 and R242–E308. 2 stretches are compositionally biased toward basic and acidic residues: residues P197–A212 and R242–A277. 10 consecutive C2H2-type zinc fingers follow at residues F315 to H337, Y346 to H369, F375 to H398, H405 to H427, Y433 to H455, F461 to H483, F489 to H511, F517 to H539, Y545 to H567, and Y573 to H595. Residue S611 is modified to Phosphoserine.

The protein belongs to the krueppel C2H2-type zinc-finger protein family. In terms of assembly, interacts with NCL. Expressed in several tissues, with highest levels in liver. Also expressed in embryos from 7 to 17 dpc.

It is found in the nucleus. The protein resides in the cytoplasm. Its subcellular location is the nucleolus. In terms of biological role, transcriptional repressor that binds the GZF1 responsive element (GRE) (consensus: 5'-TGCGCN[TG][CA]TATA-3'). May be regulating VSX2/HOX10 expression. The chain is GDNF-inducible zinc finger protein 1 from Mus musculus (Mouse).